The chain runs to 505 residues: Lysine--tRNA ligase (505 aa).

Mg(2+)-binding residues include E415 and E422.

It belongs to the class-II aminoacyl-tRNA synthetase family. In terms of assembly, homodimer. Requires Mg(2+) as cofactor.

The protein localises to the cytoplasm. The enzyme catalyses tRNA(Lys) + L-lysine + ATP = L-lysyl-tRNA(Lys) + AMP + diphosphate. This is Lysine--tRNA ligase from Yersinia pseudotuberculosis serotype O:1b (strain IP 31758).